The primary structure comprises 64 residues: Large ribosomal subunit protein bL28 (64 aa).

Belongs to the bacterial ribosomal protein bL28 family.

This chain is Large ribosomal subunit protein bL28, found in Syntrophobacter fumaroxidans (strain DSM 10017 / MPOB).